The primary structure comprises 316 residues: Olfactory receptor 12D3 (316 aa).

Topologically, residues 1–23 (MENVTTMNEFLLLGLTGVQELQP) are extracellular. N3 carries N-linked (GlcNAc...) asparagine glycosylation. Residues 24-44 (FFFGIFLIIYLINLIGNGSIL) traverse the membrane as a helical segment. The Cytoplasmic portion of the chain corresponds to 45–52 (VMVVLEPQ). Residues 53–73 (LHSPMYFFLGNLSCLDISYSS) form a helical membrane-spanning segment. Over 74–97 (VTLPKLLVNLVCSRRAISFLGCIT) the chain is Extracellular. A disulfide bridge links C95 with C187. A helical membrane pass occupies residues 98–118 (QLHFFHFLGSTEAILLAIMAF). Residues 119 to 137 (DRFVAICNPLRYTVIMNPQ) lie on the Cytoplasmic side of the membrane. A helical membrane pass occupies residues 138–158 (VCILLAAAAWLISFFYALMHS). The Extracellular segment spans residues 159-195 (VMTAHLSFCGSQKLNHFFYDVKPLLELACSDTLLNQW). Residues 196-215 (LLSIVTGSISMGAFFLTLLS) form a helical membrane-spanning segment. Residues 216 to 236 (CFYVIGFLLFKNRSCRILHKA) lie on the Cytoplasmic side of the membrane. The chain crosses the membrane as a helical span at residues 237 to 257 (LSTCASHFMVVCLFYGPVGFT). Topologically, residues 258–270 (YIRPASATSMIQD) are extracellular. The chain crosses the membrane as a helical span at residues 271 to 291 (RIMAIMYSAVTPVLNPLIYTL). Residues 292–316 (RNKEVMMALKKIFGRKLFKDWQQHH) lie on the Cytoplasmic side of the membrane.

It belongs to the G-protein coupled receptor 1 family.

It localises to the cell membrane. Odorant receptor. This is Olfactory receptor 12D3 (OR12D3) from Homo sapiens (Human).